The sequence spans 76 residues: ATP synthase subunit 9, mitochondrial (76 aa).

Helical transmembrane passes span 14-34 (ISTI…AALI) and 52-72 (ILGF…SFLL).

It belongs to the ATPase C chain family. F-type ATPases have 2 components, CF(1) - the catalytic core - and CF(0) - the membrane proton channel. CF(1) has five subunits: alpha(3), beta(3), gamma(1), delta(1), epsilon(1). CF(0) has three main subunits: a, b and c.

The protein localises to the mitochondrion membrane. Mitochondrial membrane ATP synthase (F(1)F(0) ATP synthase or Complex V) produces ATP from ADP in the presence of a proton gradient across the membrane which is generated by electron transport complexes of the respiratory chain. F-type ATPases consist of two structural domains, F(1) - containing the extramembraneous catalytic core and F(0) - containing the membrane proton channel, linked together by a central stalk and a peripheral stalk. During catalysis, ATP synthesis in the catalytic domain of F(1) is coupled via a rotary mechanism of the central stalk subunits to proton translocation. Part of the complex F(0) domain. A homomeric c-ring of probably 10 subunits is part of the complex rotary element. The sequence is that of ATP synthase subunit 9, mitochondrial (ATP9) from Vanderwaltozyma polyspora (strain ATCC 22028 / DSM 70294 / BCRC 21397 / CBS 2163 / NBRC 10782 / NRRL Y-8283 / UCD 57-17) (Kluyveromyces polysporus).